The following is a 129-amino-acid chain: Small ribosomal subunit protein uS12 (129 aa).

The segment at 1-25 (MPTYNQLVRFGRKSKTRKTKSPALE) is disordered. Basic residues predominate over residues 10–20 (FGRKSKTRKTK). The residue at position 89 (D89) is a 3-methylthioaspartic acid. The disordered stretch occupies residues 109-129 (GRKQGRSRYGTPRKQVAVTKK).

The protein belongs to the universal ribosomal protein uS12 family. As to quaternary structure, part of the 30S ribosomal subunit. Contacts proteins S8 and S17. May interact with IF1 in the 30S initiation complex.

Its function is as follows. With S4 and S5 plays an important role in translational accuracy. Functionally, interacts with and stabilizes bases of the 16S rRNA that are involved in tRNA selection in the A site and with the mRNA backbone. Located at the interface of the 30S and 50S subunits, it traverses the body of the 30S subunit contacting proteins on the other side and probably holding the rRNA structure together. The combined cluster of proteins S8, S12 and S17 appears to hold together the shoulder and platform of the 30S subunit. This Rickettsia peacockii (strain Rustic) protein is Small ribosomal subunit protein uS12.